Here is a 220-residue protein sequence, read N- to C-terminus: Uracil-DNA glycosylase (220 aa).

Asp65 acts as the Proton acceptor in catalysis.

Belongs to the uracil-DNA glycosylase (UDG) superfamily. UNG family.

Its subcellular location is the cytoplasm. The enzyme catalyses Hydrolyzes single-stranded DNA or mismatched double-stranded DNA and polynucleotides, releasing free uracil.. In terms of biological role, excises uracil residues from the DNA which can arise as a result of misincorporation of dUMP residues by DNA polymerase or due to deamination of cytosine. The protein is Uracil-DNA glycosylase of Phocaeicola vulgatus (strain ATCC 8482 / DSM 1447 / JCM 5826 / CCUG 4940 / NBRC 14291 / NCTC 11154) (Bacteroides vulgatus).